The following is a 397-amino-acid chain: DNA-directed RNA polymerase subunit Rpo1C (397 aa).

Belongs to the RNA polymerase beta' chain family. As to quaternary structure, part of the RNA polymerase complex. An artificial construct of the RNAP clamp domain (including part of this protein) contacts transcription elongation factors Spt4 and Spt5.

The protein localises to the cytoplasm. It catalyses the reaction RNA(n) + a ribonucleoside 5'-triphosphate = RNA(n+1) + diphosphate. Functionally, DNA-dependent RNA polymerase (RNAP) catalyzes the transcription of DNA into RNA using the four ribonucleoside triphosphates as substrates. Forms part of the jaw domain. This is DNA-directed RNA polymerase subunit Rpo1C from Pyrococcus furiosus (strain ATCC 43587 / DSM 3638 / JCM 8422 / Vc1).